The primary structure comprises 143 residues: Large ribosomal subunit protein uL15 (143 aa).

Residues 1–54 (MELNSIKPAEGAKHAKRRVGRGIGSGLGKTAGRGHKGQKSRSGGYHKVGFEGGQ) are disordered. Residues 21–31 (RGIGSGLGKTA) show a composition bias toward gly residues.

Belongs to the universal ribosomal protein uL15 family. In terms of assembly, part of the 50S ribosomal subunit.

Binds to the 23S rRNA. The chain is Large ribosomal subunit protein uL15 from Paracidovorax citrulli (strain AAC00-1) (Acidovorax citrulli).